The primary structure comprises 442 residues: Septin-8 (442 aa).

Residues 1-16 (MAATDLERISNAEPEP) show a composition bias toward basic and acidic residues. The tract at residues 1 to 21 (MAATDLERISNAEPEPRSLSL) is disordered. Ala2 carries the N-acetylalanine modification. The residue at position 10 (Ser10) is a Phosphoserine. A Septin-type G domain is found at 41-307 (QGFSFNILCV…ELYRRCKLEE (267 aa)). Positions 51 to 58 (GETGIGKS) are G1 motif. GTP contacts are provided by residues 51 to 58 (GETGIGKS), Gly106, 187 to 195 (KADTISKSE), Gly241, and Arg256. Positions 103 to 106 (DAVG) are G3 motif. The segment at 186–189 (AKAD) is G4 motif. Positions 322–407 (LQETYEAKRK…FNCRKAAMEA (86 aa)) form a coiled coil. Residues 411–420 (QALHATSQQP) are compositionally biased toward polar residues. Residues 411-442 (QALHATSQQPLRKDKDKKKVGGWSSIYSVTIP) are disordered.

This sequence belongs to the TRAFAC class TrmE-Era-EngA-EngB-Septin-like GTPase superfamily. Septin GTPase family. Septins polymerize into heterooligomeric protein complexes that form filaments, and can associate with cellular membranes, actin filaments and microtubules. GTPase activity is required for filament formation. Interacts with SEPTIN7. Interacts with CDK14, SEPTIN4 and SEPTIN5. Interacts with VAMP2; the interaction inhibits interaction of VAMP2 with SYP. Interacts with STX1A. In terms of tissue distribution, expressed in cerebrum, hippocampus and cerebellum (at protein level). Expressed in heart (at protein level).

The protein localises to the cytoplasm. The protein resides in the cytoskeleton. It localises to the synapse. It is found in the cell projection. Its subcellular location is the axon. The protein localises to the cytoplasmic vesicle. The protein resides in the secretory vesicle. It localises to the synaptic vesicle membrane. It is found in the presynapse. Filament-forming cytoskeletal GTPase. May play a role in platelet secretion. Seems to participate in the process of SNARE complex formation in synaptic vesicles. In Rattus norvegicus (Rat), this protein is Septin-8.